The following is a 194-amino-acid chain: Large ribosomal subunit protein uL5 (194 aa).

This sequence belongs to the universal ribosomal protein uL5 family. In terms of assembly, part of the 50S ribosomal subunit; part of the 5S rRNA/L5/L18/L25 subcomplex. Contacts the 5S rRNA and the P site tRNA. Forms a bridge to the 30S subunit in the 70S ribosome.

Its function is as follows. This is one of the proteins that bind and probably mediate the attachment of the 5S RNA into the large ribosomal subunit, where it forms part of the central protuberance. In the 70S ribosome it contacts protein S13 of the 30S subunit (bridge B1b), connecting the 2 subunits; this bridge is implicated in subunit movement. Contacts the P site tRNA; the 5S rRNA and some of its associated proteins might help stabilize positioning of ribosome-bound tRNAs. This chain is Large ribosomal subunit protein uL5, found in Frankia alni (strain DSM 45986 / CECT 9034 / ACN14a).